Here is a 76-residue protein sequence, read N- to C-terminus: Kappa-actitoxin-Avd4o (76 aa).

The N-terminal stretch at 1–19 (MNKALFLSLVVLCAAVVFA) is a signal peptide. Positions 20 to 33 (AEDLQKAKHAPFKL) are excised as a propeptide. 3 disulfide bridges follow: C37-C72, C39-C65, and C55-C73.

Belongs to the sea anemone type 3 (BDS) potassium channel toxin family. In terms of tissue distribution, experimental results show no expression in the ectodermal tissue from the distal and proximal tentacles, body wall, and oral disk. Since paralogs are expressed in this tissue, an expression of this toxin in this tissue is probable. The negative results could be explained by the very low abundance of EST sequences.

The protein localises to the secreted. The protein resides in the nematocyst. Blocks Kv3 voltage-gated potassium channels. Reduces blood pressure. This chain is Kappa-actitoxin-Avd4o, found in Anemonia viridis (Snakelocks anemone).